A 138-amino-acid chain; its full sequence is Basic phospholipase A2 homolog ammodytin L (138 aa).

The N-terminal stretch at 1 to 16 (MRILWIVAVCLIGVEG) is a signal peptide. Disulfide bonds link C42–C131, C44–C60, C59–C111, C65–C138, C66–C104, C73–C97, and C91–C102. Positions 121–133 (KKYKVYLRFKCKG) are important for membrane-damaging activities in eukaryotes and bacteria; heparin-binding.

Belongs to the phospholipase A2 family. Group II subfamily. S49 sub-subfamily. In terms of tissue distribution, expressed by the venom gland.

It is found in the secreted. Snake venom phospholipase A2 homolog that lacks enzymatic activity. Is very active in inducing myonecrosis in vivo and shows a potent calcium-independent membrane-damaging activity in vitro, most probably by binding and incorporating in the membrane. Also acts as a presynaptic neurotoxin. A model of myotoxic mechanism has been proposed: an apo Lys49-PLA2 is activated by the entrance of a hydrophobic molecule (e.g. fatty acid) at the hydrophobic channel of the protein leading to a reorientation of a monomer. This reorientation causes a transition between 'inactive' to 'active' states, causing alignment of C-terminal and membrane-docking sites (MDoS) side-by-side and putting the membrane-disruption sites (MDiS) in the same plane, exposed to solvent and in a symmetric position for both monomers. The MDoS region stabilizes the toxin on membrane by the interaction of charged residues with phospholipid head groups. Subsequently, the MDiS region destabilizes the membrane with penetration of hydrophobic residues. This insertion causes a disorganization of the membrane, allowing an uncontrolled influx of ions (i.e. calcium and sodium), and eventually triggering irreversible intracellular alterations and cell death. The sequence is that of Basic phospholipase A2 homolog ammodytin L from Vipera ammodytes ammodytes (Western sand viper).